Consider the following 142-residue polypeptide: Protein KNATM (142 aa).

Residues 4–36 (KKDENSILENMKQEINHSLKEEAQEEEEILKKR) adopt a coiled-coil conformation.

In terms of assembly, interacts with KNAT1, KNAT3, KNAT4, BEL1, BLH2, BLH4 and BLH9, but not with BLH8 or the KNATM-A and KNATM-C isoforms. Isoforms KNATM-A and KNATM-C: no interactions with KNATM-B, KNOXX or BELL proteins. As to expression, detected in inflorescences, seedlings, leaves, hydathodes, stems, roots, embryo and siliques. Expressed in a polar pattern in organ primordia and at the boundary of mature organs. Detected in the lateral domains of flower meristems, but not in the inflorescence meristem or the vegetative shoot apical meristem.

Its subcellular location is the cytoplasm. The protein localises to the nucleus. Its function is as follows. Transcriptional regulator involved in leaf proximal/distal patterning. May act by sequestering BELL transcription factors. This is Protein KNATM from Arabidopsis thaliana (Mouse-ear cress).